The primary structure comprises 307 residues: Chaperone protein DnaJ 2 (307 aa).

One can recognise a J domain in the interval 6–71 (NYYQILGVPR…TKRRELDSRL (66 aa)). The disordered stretch occupies residues 69–133 (SRLFGRFRRP…TRRTKVVSPA (65 aa)). Residues 88 to 99 (NGGRSPNGTSVN) show a composition bias toward polar residues. Positions 100 to 114 (GQVRTPTGRTGTRQP) are enriched in low complexity.

The protein belongs to the DnaJ family. As to quaternary structure, homodimer. The cofactor is Zn(2+).

It is found in the cytoplasm. Functionally, participates actively in the response to hyperosmotic and heat shock by preventing the aggregation of stress-denatured proteins and by disaggregating proteins, also in an autonomous, DnaK-independent fashion. Unfolded proteins bind initially to DnaJ; upon interaction with the DnaJ-bound protein, DnaK hydrolyzes its bound ATP, resulting in the formation of a stable complex. GrpE releases ADP from DnaK; ATP binding to DnaK triggers the release of the substrate protein, thus completing the reaction cycle. Several rounds of ATP-dependent interactions between DnaJ, DnaK and GrpE are required for fully efficient folding. Also involved, together with DnaK and GrpE, in the DNA replication of plasmids through activation of initiation proteins. The polypeptide is Chaperone protein DnaJ 2 (dnaJ2) (Synechocystis sp. (strain ATCC 27184 / PCC 6803 / Kazusa)).